We begin with the raw amino-acid sequence, 520 residues long: F-box/LRR-repeat protein At3g59200 (520 aa).

One can recognise an F-box domain in the interval 6–54 (RDRISSLPNPVVSHILSFLPTKEAASTSVLSKKWRYLFAYVTNLDFDDS). LRR repeat units lie at residues 170 to 197 (CVDV…VLMN), 219 to 244 (FCEE…EYSD), and 340 to 365 (NSEI…VLKR).

This Arabidopsis thaliana (Mouse-ear cress) protein is F-box/LRR-repeat protein At3g59200.